A 415-amino-acid polypeptide reads, in one-letter code: Gamma-glutamyl phosphate reductase (415 aa).

It belongs to the gamma-glutamyl phosphate reductase family.

It is found in the cytoplasm. It carries out the reaction L-glutamate 5-semialdehyde + phosphate + NADP(+) = L-glutamyl 5-phosphate + NADPH + H(+). Its pathway is amino-acid biosynthesis; L-proline biosynthesis; L-glutamate 5-semialdehyde from L-glutamate: step 2/2. In terms of biological role, catalyzes the NADPH-dependent reduction of L-glutamate 5-phosphate into L-glutamate 5-semialdehyde and phosphate. The product spontaneously undergoes cyclization to form 1-pyrroline-5-carboxylate. The polypeptide is Gamma-glutamyl phosphate reductase (Bacillus velezensis (strain DSM 23117 / BGSC 10A6 / LMG 26770 / FZB42) (Bacillus amyloliquefaciens subsp. plantarum)).